We begin with the raw amino-acid sequence, 119 residues long: MORF4 family associated protein 1 like 2 (119 aa).

Positions 1 to 16 (MRPVDADEAREPREEP) are enriched in basic and acidic residues. A disordered region spans residues 1–36 (MRPVDADEAREPREEPGSPLSPAPRAGRENLASLER).

The protein belongs to the MORF4 family-associated protein family. May interact with CDK2AP1.

In terms of biological role, may play a role in cell proliferation. The chain is MORF4 family associated protein 1 like 2 from Homo sapiens (Human).